A 171-amino-acid chain; its full sequence is MNIKTGDTVVVIAGGDQFAVDKKGVKTRKTGRVLKIDRVKNTVIVEGVNIVKKHQRPTSANDKGGIVEIPAPIHASNVAILDPKTNTPTRIGHRIENGVKVRYAKKSGQTLDKAAKPAKTKAEKVEKAATSSTDKPAKVTKAAKEAKPVKAVKSQKVEKNTSVQKKGASGK.

The large ribosomal subunit protein uL24 stretch occupies residues 1–124; the sequence is MNIKTGDTVV…AKPAKTKAEK (124 aa). Residues 108–171 are disordered; the sequence is GQTLDKAAKP…SVQKKGASGK (64 aa). A unknown region spans residues 125–171; sequence VEKAATSSTDKPAKVTKAAKEAKPVKAVKSQKVEKNTSVQKKGASGK.

It belongs to the universal ribosomal protein uL24 family. As to quaternary structure, part of the 50S ribosomal subunit.

Its function is as follows. One of two assembly initiator proteins, it binds directly to the 5'-end of the 23S rRNA, where it nucleates assembly of the 50S subunit. Functionally, one of the proteins that surrounds the polypeptide exit tunnel on the outside of the subunit. The polypeptide is Large ribosomal subunit protein uL24 (Acholeplasma laidlawii (strain PG-8A)).